A 416-amino-acid polypeptide reads, in one-letter code: MSAEIICVGTELLLGEILNSNAQFLAQQLASLGIPHYYQTVVGDNPTRIKKVVAIACDRARLLIFTGGLGPTPDDLTTETLADFFATPLEERPEILADLERKYAHRGGFSPSNRKQALLPVGAQILPNPLGTAPGMIWQPRTGLTILTFPGVPAEMKQMWHETAVPFLCSQGWGKEVIYSRVLRFWGIPESMLAEKVAAQIAREHPTVAPYASNGEARLRITVRAKDEAEAQQLIQPVEAEIRQIIGLDCYGADEDTLAGVVARLLQERQQTVAVAESCTGGGLGEMLTRLPGSSLYFKGGVIAYANEIKVTLLGVNPEELEREGAVSAAVAAQMALGVKTRLASDWGVSITGIAGPGGATLRKPVGLVYIGVALPNGEVISREFRFSGQRGRDWVRYLSTMNALDLLRRQLLVNP.

This sequence belongs to the CinA family.

This is CinA-like protein from Thermosynechococcus vestitus (strain NIES-2133 / IAM M-273 / BP-1).